The chain runs to 484 residues: Argininosuccinate lyase (484 aa).

Belongs to the lyase 1 family. Argininosuccinate lyase subfamily.

It is found in the cytoplasm. It carries out the reaction 2-(N(omega)-L-arginino)succinate = fumarate + L-arginine. It participates in amino-acid biosynthesis; L-arginine biosynthesis; L-arginine from L-ornithine and carbamoyl phosphate: step 3/3. The protein is Argininosuccinate lyase of Methanocaldococcus jannaschii (strain ATCC 43067 / DSM 2661 / JAL-1 / JCM 10045 / NBRC 100440) (Methanococcus jannaschii).